A 201-amino-acid polypeptide reads, in one-letter code: uncharacterized protein (201 aa).

This sequence belongs to the phosphatidylethanolamine-binding protein family.

This is an uncharacterized protein from Saccharomyces cerevisiae (strain ATCC 204508 / S288c) (Baker's yeast).